Consider the following 560-residue polypeptide: DNA ligase B (560 aa).

The active-site N6-AMP-lysine intermediate is the Lys124.

Belongs to the NAD-dependent DNA ligase family. LigB subfamily.

It carries out the reaction NAD(+) + (deoxyribonucleotide)n-3'-hydroxyl + 5'-phospho-(deoxyribonucleotide)m = (deoxyribonucleotide)n+m + AMP + beta-nicotinamide D-nucleotide.. Catalyzes the formation of phosphodiester linkages between 5'-phosphoryl and 3'-hydroxyl groups in double-stranded DNA using NAD as a coenzyme and as the energy source for the reaction. This chain is DNA ligase B, found in Shigella flexneri.